A 258-amino-acid polypeptide reads, in one-letter code: Tryptophan synthase alpha chain (258 aa).

Active-site proton acceptor residues include Glu-52 and Asp-63.

Belongs to the TrpA family. As to quaternary structure, tetramer of two alpha and two beta chains.

It carries out the reaction (1S,2R)-1-C-(indol-3-yl)glycerol 3-phosphate + L-serine = D-glyceraldehyde 3-phosphate + L-tryptophan + H2O. It functions in the pathway amino-acid biosynthesis; L-tryptophan biosynthesis; L-tryptophan from chorismate: step 5/5. The alpha subunit is responsible for the aldol cleavage of indoleglycerol phosphate to indole and glyceraldehyde 3-phosphate. In Streptococcus pneumoniae (strain Taiwan19F-14), this protein is Tryptophan synthase alpha chain.